Reading from the N-terminus, the 328-residue chain is MSPKTTKKIAILTSGGDAPGMNATLVYLTRYATSSEIEVFFVKNGYYGLYHDELVPAHQLDLSNSLFSAGTVIGSKRFVEFKELKVREQAAQNLKKRQIDYLVVIGGDGSYMGAKLLSELGVNCYCLPGTIDNDINSSEFTIGFLTALESIKVNVQAVYHTTKSHERVAIVEVMGRHCGDLAIFGALATNADFVVTPSNKMDLKQLESAVKKILQHQNHCVVIVSENIYGFDGYPSLTAIKQHFDANNMKCNLVSLGHTQRGFAPTSLELVQISLMAQHTINLIGQNKVNQVIGNKANVPVNYDFDQAFNMPPVDRSALIAVINKNII.

ATP contacts are provided by residues Gly16, 77 to 78, and 107 to 110; these read RF and GDGS. Asp108 is a Mg(2+) binding site. Residues 130-132, Arg167, 174-176, Glu226, and 258-261 contribute to the substrate site; these read TID, MGR, and HTQR. Asp132 functions as the Proton acceptor in the catalytic mechanism.

The protein belongs to the phosphofructokinase type A (PFKA) family. In terms of assembly, homotetramer. Requires Mg(2+) as cofactor.

It localises to the cytoplasm. The catalysed reaction is beta-D-fructose 6-phosphate + ATP = beta-D-fructose 1,6-bisphosphate + ADP + H(+). Its pathway is carbohydrate degradation; glycolysis; D-glyceraldehyde 3-phosphate and glycerone phosphate from D-glucose: step 3/4. In terms of biological role, catalyzes the phosphorylation of D-fructose 6-phosphate to fructose 1,6-bisphosphate by ATP, the first committing step of glycolysis. This chain is Probable ATP-dependent 6-phosphofructokinase (pfkA), found in Mycoplasma pneumoniae (strain ATCC 29342 / M129 / Subtype 1) (Mycoplasmoides pneumoniae).